The primary structure comprises 270 residues: Ribonuclease HII (270 aa).

The RNase H type-2 domain maps to 28 to 222 (RQVAGADEAG…VSGRQGAPPR (195 aa)). The a divalent metal cation site is built by Asp-34, Glu-35, and Asp-128.

The protein belongs to the RNase HII family. Mn(2+) serves as cofactor. The cofactor is Mg(2+).

It localises to the cytoplasm. The catalysed reaction is Endonucleolytic cleavage to 5'-phosphomonoester.. Its function is as follows. Endonuclease that specifically degrades the RNA of RNA-DNA hybrids. The sequence is that of Ribonuclease HII from Salinispora tropica (strain ATCC BAA-916 / DSM 44818 / JCM 13857 / NBRC 105044 / CNB-440).